A 3381-amino-acid polypeptide reads, in one-letter code: Versican core protein (3381 aa).

The N-terminal stretch at 1-20 (MLINIKSILWMCSTLIAAHA) is a signal peptide. Residues 21–147 (LQKVNMEKSP…EDTQDTVSLT (127 aa)) form the Ig-like V-type domain. Disulfide bonds link Cys44/Cys131, Cys173/Cys244, Cys197/Cys218, Cys271/Cys346, and Cys295/Cys316. Asn57 carries N-linked (GlcNAc...) asparagine glycosylation. Link domains are found at residues 151–246 (VVFH…YCYV) and 252–348 (DVFH…YCFK). N-linked (GlcNAc...) asparagine glycosylation is found at Asn331 and Asn352. The GAG-alpha (glucosaminoglycan attachment domain) stretch occupies residues 349 to 1336 (PKQNISEATT…IIEVRENKTG (988 aa)). Polar residues predominate over residues 417 to 427 (PLTSTHRSATE). Disordered regions lie at residues 417 to 437 (PLTS…SMKK) and 603 to 623 (ESVS…MDHR). Ser660 carries an O-linked (Xyl...) (chondroitin sulfate) serine glycan. Positions 816–866 (DNTTSKPLGSTEHVGSPKLPPALITTTGVSGKDKEMPSLTEDGRDEFTRIP) are disordered. Asn817 is a glycosylation site (N-linked (GlcNAc...) asparagine). The segment covering 846-863 (GKDKEMPSLTEDGRDEFT) has biased composition (basic and acidic residues). 2 N-linked (GlcNAc...) asparagine glycosylation sites follow: Asn965 and Asn1017. The span at 1043 to 1052 (EDFLWKEQTP) shows a compositional bias: basic and acidic residues. Disordered regions lie at residues 1043–1081 (EDFL…SDGS) and 1218–1244 (FSSA…PDEE). N-linked (GlcNAc...) asparagine glycosylation is present at Asn1333. Positions 1337-3074 (RMSDFSVSGH…VEGTAVYLPG (1738 aa)) are GAG-beta. The segment at 1338-1362 (MSDFSVSGHPIDSESKEDEPCSEET) is disordered. Acidic residues predominate over residues 1352–1362 (SKEDEPCSEET). Asn1393 is a glycosylation site (N-linked (GlcNAc...) asparagine). Residues 1417–1428 (KDPEAAEARRGQ) are compositionally biased toward basic and acidic residues. Disordered regions lie at residues 1417–1446 (KDPE…ESDS), 1455–1474 (GLPT…SLEI), and 1484–1512 (TAEP…GPDS). N-linked (GlcNAc...) asparagine glycosylation is found at Asn1437 and Asn1463. Ser1539 and Ser1621 each carry an O-linked (Xyl...) (chondroitin sulfate) serine glycan. N-linked (GlcNAc...) asparagine glycosylation is present at Asn1653. A disordered region spans residues 1708-1785 (PPLEETTRKE…ERETTSSTVV (78 aa)). A compositionally biased stretch (basic and acidic residues) spans 1712–1721 (ETTRKEEEKG). The segment covering 1726 to 1738 (ASTVEVHSPTQRL) has biased composition (polar residues). Over residues 1743 to 1761 (SPSELESSSETPPDDSAAA) the composition is skewed to low complexity. Residues 1764 to 1784 (KSFTSQMTPTQSERETTSSTV) show a composition bias toward polar residues. O-linked (Xyl...) (chondroitin sulfate) serine glycosylation is found at Ser1928 and Ser1952. Positions 1964 to 1976 (PSVTPTSDLSNHT) are enriched in polar residues. 2 disordered regions span residues 1964-1986 (PSVT…GSTL) and 2041-2126 (EGAI…QSSV). Residues Asn1974, Asn2045, Asn2074, and Asn2103 are each glycosylated (N-linked (GlcNAc...) asparagine). A compositionally biased stretch (basic and acidic residues) spans 2065–2075 (STEEGEVKENH). Ser2109 carries the phosphoserine modification. 2 O-linked (Xyl...) (chondroitin sulfate) serine glycosylation sites follow: Ser2240 and Ser2247. Residues Asn2263, Asn2290, and Asn2356 are each glycosylated (N-linked (GlcNAc...) asparagine). 3 disordered regions span residues 2338-2388 (EGPF…AETK), 2490-2512 (EQRE…EKAT), and 2594-2615 (TDLD…TQVQ). 2 stretches are compositionally biased toward polar residues: residues 2345–2357 (LTFS…PQNQ) and 2367–2383 (TSRP…ENSV). 2 positions are modified to phosphoserine: Ser2607 and Ser2608. The residue at position 2612 (Thr2612) is a Phosphothreonine. Asn2623 and Asn2641 each carry an N-linked (GlcNAc...) asparagine glycan. 3 O-linked (Xyl...) (chondroitin sulfate) serine glycosylation sites follow: Ser2714, Ser2715, and Ser2759. The disordered stretch occupies residues 2819–2893 (PPLSIHLGSG…EPSEDESKPK (75 aa)). Polar residues predominate over residues 2840–2851 (ALPSTDASTPPV). 2 N-linked (GlcNAc...) asparagine glycosylation sites follow: Asn2919 and Asn3052. An EGF-like 1 domain is found at 3074–3110 (GPDRCKMNPCLNGGTCYPTETSYVCTCVPGYSGDRCE). 11 disulfide bridges follow: Cys3078–Cys3089, Cys3083–Cys3098, Cys3100–Cys3109, Cys3116–Cys3127, Cys3121–Cys3136, Cys3138–Cys3147, Cys3154–Cys3165, Cys3182–Cys3274, Cys3250–Cys3266, Cys3281–Cys3324, and Cys3310–Cys3337. In terms of domain architecture, EGF-like 2; calcium-binding spans 3112 to 3148 (DFDECHSNPCRNGATCIDGFNTFRCLCLPSYVGALCE). A C-type lectin domain is found at 3161–3275 (FQGQCYKYFA…CNYHLTYTCK (115 aa)). The region spanning 3279 to 3339 (VACGQPPVVE…WAMPKITCLN (61 aa)) is the Sushi domain. Residues Asn3354 and Asn3364 are each glycosylated (N-linked (GlcNAc...) asparagine). The span at 3355–3365 (SSSAKDNSINT) shows a compositional bias: polar residues. Positions 3355-3381 (SSSAKDNSINTSKHDHRWSRRWQESRR) are disordered.

This sequence belongs to the aggrecan/versican proteoglycan family. In terms of assembly, interacts with FBLN1. In terms of processing, phosphorylated by FAM20C in the extracellular medium. Proteolytically cleaved by ADAMTS5 and ADAMTS15 in the pericellular matrix surrounding myoblasts, facilitating myoblast contact and fusion which is required for skeletal muscle development and regeneration. In terms of tissue distribution, cerebral white matter. Isoform V0 and isoform V1 are expressed in the central nervous system, and in a number of mesenchymal and epithelial tissues; the major isoform V2 is restricted to the central nervous system.

Its subcellular location is the secreted. The protein localises to the extracellular space. It localises to the extracellular matrix. The protein resides in the cell projection. It is found in the cilium. Its subcellular location is the photoreceptor outer segment. The protein localises to the interphotoreceptor matrix. Functionally, may play a role in intercellular signaling and in connecting cells with the extracellular matrix. May take part in the regulation of cell motility, growth and differentiation. Binds hyaluronic acid. In Bos taurus (Bovine), this protein is Versican core protein (VCAN).